The following is a 233-amino-acid chain: Transcriptional regulatory protein NatR (233 aa).

Residues K3 to L117 form the Response regulatory domain. D54 is modified (4-aspartylphosphate). The HTH LytTR-type domain maps to I129–F233.

Post-translationally, phosphorylated by NatK.

The protein resides in the cytoplasm. In terms of biological role, member of the two-component regulatory system NatK/NatR that positively regulates the expression of the natAB operon. Acts by binding directly to the promoter of natAB. The chain is Transcriptional regulatory protein NatR from Bacillus subtilis (strain 168).